The primary structure comprises 145 residues: MKIKIQKIHPNALIPKYQTDGSSGFDLHAVEEVMIKPHSVGLVKIGICLSLEVGYELQVRTRSGLALNHQVMVLNSPGTVDNDYRGEIKVILANLSDKDFKVQVGDRIAQGVVQKTYKAEFIECEQLDETSRGSGGFGSTGVSKA.

Substrate is bound by residues 62–64 (RSG), N75, 79–81 (TVD), and K89.

Belongs to the dUTPase family. Requires Mg(2+) as cofactor.

It carries out the reaction dUTP + H2O = dUMP + diphosphate + H(+). The protein operates within pyrimidine metabolism; dUMP biosynthesis; dUMP from dCTP (dUTP route): step 2/2. This enzyme is involved in nucleotide metabolism: it produces dUMP, the immediate precursor of thymidine nucleotides and it decreases the intracellular concentration of dUTP so that uracil cannot be incorporated into DNA. The chain is Deoxyuridine 5'-triphosphate nucleotidohydrolase from Helicobacter pylori (strain ATCC 700392 / 26695) (Campylobacter pylori).